We begin with the raw amino-acid sequence, 162 residues long: Protein-export protein SecB (162 aa).

It belongs to the SecB family. As to quaternary structure, homotetramer, a dimer of dimers. One homotetramer interacts with 1 SecA dimer.

It localises to the cytoplasm. Functionally, one of the proteins required for the normal export of preproteins out of the cell cytoplasm. It is a molecular chaperone that binds to a subset of precursor proteins, maintaining them in a translocation-competent state. It also specifically binds to its receptor SecA. The protein is Protein-export protein SecB of Hamiltonella defensa subsp. Acyrthosiphon pisum (strain 5AT).